A 205-amino-acid chain; its full sequence is MNRFVVAEPLWCTGCNTCLAACSDVHKTQGLQQHPRLALAKTSTITAPVVCHHCEEAPCLQVCPVNAISQRDDAIQLNESLCIGCKLCAVVCPFGAISASGSRPVNAHAQYVFQAEGSLKDGEENAPTQHALLRWEPGVQTVAVKCDLCDFLPEGPACVRACPNQALRLITGDSLQRQMKEKQRLAASWFANGGEDPLSLTQEQR.

4 4Fe-4S ferredoxin-type domains span residues 2–31, 41–72, 73–102, and 140–172; these read NRFV…TQGL, KTST…SQRD, DAIQ…ASGS, and QTVA…LITG. Residues cysteine 12, cysteine 15, cysteine 18, cysteine 22, cysteine 51, cysteine 54, cysteine 59, cysteine 63, cysteine 82, cysteine 85, cysteine 88, cysteine 92, cysteine 146, cysteine 149, cysteine 158, and cysteine 162 each contribute to the [4Fe-4S] cluster site.

It depends on [4Fe-4S] cluster as a cofactor.

Functionally, probable electron transfer protein for hydrogenase 4. This Escherichia coli (strain K12) protein is Hydrogenase-4 component A.